Reading from the N-terminus, the 274-residue chain is Undecaprenyl-diphosphatase (274 aa).

Transmembrane regions (helical) follow at residues 4–24 (PLFV…FLPI), 41–61 (DATS…AVCW), 83–103 (FVGL…MFHS), 108–128 (LLFN…LILW), 184–204 (AAEF…VYDL), 218–238 (VFAI…KAFI), and 246–266 (FIAF…TWQL).

The protein belongs to the UppP family.

Its subcellular location is the cell inner membrane. The enzyme catalyses di-trans,octa-cis-undecaprenyl diphosphate + H2O = di-trans,octa-cis-undecaprenyl phosphate + phosphate + H(+). In terms of biological role, catalyzes the dephosphorylation of undecaprenyl diphosphate (UPP). Confers resistance to bacitracin. The chain is Undecaprenyl-diphosphatase from Aromatoleum aromaticum (strain DSM 19018 / LMG 30748 / EbN1) (Azoarcus sp. (strain EbN1)).